The following is a 912-amino-acid chain: Tubulin polyglutamylase TTLL7 (912 aa).

Residues 38–390 (KGIITANVAG…RTSDKRKNLA (353 aa)) enclose the TTL domain. ATP-binding positions include K160, 166-167 (MG), 188-191 (QEYI), and 201-203 (KFD). Residue R227 participates in L-glutamate binding. An ATP-binding site is contributed by 249–250 (TN). Y251, S252, and K271 together coordinate L-glutamate. Residues D336, E349, and N351 each coordinate Mg(2+). K367 contacts L-glutamate. Residues 388 to 450 (NLAKQKAEAQ…VSQEEHENRH (63 aa)) are c-MTBD region. Disordered regions lie at residues 547 to 570 (YGSS…ENEK) and 658 to 688 (PTSA…STNT). A compositionally biased stretch (low complexity) spans 549 to 563 (SSDSSYDSSSSSSNS). A compositionally biased stretch (polar residues) spans 659 to 671 (TSASRSHSLNRAS).

Belongs to the tubulin--tyrosine ligase family. In terms of assembly, interacts with both alpha- and beta-tubulin (via C-terminal tubulin tails). Requires Mg(2+) as cofactor. Highly expressed in brain, testis and trachea. Expressed in brain, heart, kidney, liver, lung, muscle and trachea. In the brain, highly expressed in hippocampus, thalamus, olfactory bulb and cerebellum cortex, corpus callosum and striatum.

The protein resides in the cell projection. It localises to the cilium. Its subcellular location is the cytoplasm. The protein localises to the cytoskeleton. It is found in the cilium basal body. The protein resides in the dendrite. It localises to the perikaryon. It carries out the reaction L-glutamyl-[protein] + L-glutamate + ATP = gamma-L-glutamyl-L-glutamyl-[protein] + ADP + phosphate + H(+). The enzyme catalyses (L-glutamyl)(n)-gamma-L-glutamyl-L-glutamyl-[protein] + L-glutamate + ATP = (L-glutamyl)(n+1)-gamma-L-glutamyl-L-glutamyl-[protein] + ADP + phosphate + H(+). In terms of biological role, polyglutamylase which modifies tubulin, generating polyglutamate side chains of variable lengths on the gamma-carboxyl group of specific glutamate residues within the C-terminal tail of tubulin. Mediates both ATP-dependent initiation and elongation steps of the polyglutamylation reaction. Preferentially modifies the beta-tubulin tail over an alpha-tail. Competes with monoglycylase TTLL3 for modification site on beta-tubulin substrate, thereby creating an anticorrelation between glycylation and glutamylation reactions. Required for neurite growth; responsible for the strong increase in tubulin polyglutamylation during postnatal neuronal maturation. This Mus musculus (Mouse) protein is Tubulin polyglutamylase TTLL7.